The following is a 454-amino-acid chain: Ribosomal protein uS12 methylthiotransferase RimO (454 aa).

In terms of domain architecture, MTTase N-terminal spans 14 to 125 (SKVAFSHVGC…IAKVLDRVEK (112 aa)). [4Fe-4S] cluster-binding residues include Cys23, Cys59, Cys88, Cys163, Cys167, and Cys170. Positions 149 to 378 (DKNKFVAYLR…ISVQQNISKD (230 aa)) constitute a Radical SAM core domain. In terms of domain architecture, TRAM spans 381 to 452 (QSYVGSKMKI…EYDLYGETLK (72 aa)).

This sequence belongs to the methylthiotransferase family. RimO subfamily. The cofactor is [4Fe-4S] cluster.

It localises to the cytoplasm. It catalyses the reaction L-aspartate(89)-[ribosomal protein uS12]-hydrogen + (sulfur carrier)-SH + AH2 + 2 S-adenosyl-L-methionine = 3-methylsulfanyl-L-aspartate(89)-[ribosomal protein uS12]-hydrogen + (sulfur carrier)-H + 5'-deoxyadenosine + L-methionine + A + S-adenosyl-L-homocysteine + 2 H(+). In terms of biological role, catalyzes the methylthiolation of an aspartic acid residue of ribosomal protein uS12. This Prochlorococcus marinus (strain MIT 9215) protein is Ribosomal protein uS12 methylthiotransferase RimO.